Reading from the N-terminus, the 204-residue chain is Lipoprotein signal peptidase (204 aa).

The segment at 1–42 is disordered; it reads MAEAERIIGTPDIPDAAGEGQERPDADPEREQQEQEQAPERT. The span at 20–42 shows a compositional bias: basic and acidic residues; that stretch reads GQERPDADPEREQQEQEQAPERT. The next 3 membrane-spanning stretches (helical) occupy residues 50-70, 100-120, and 126-146; these read VLFA…MLVV, FGEA…VVIA, and LHSL…LGNL. Active-site residues include D163 and D177. A helical membrane pass occupies residues 170-190; that stretch reads FAVFNLADSAIVCGGILIVIL.

This sequence belongs to the peptidase A8 family.

The protein resides in the cell membrane. It catalyses the reaction Release of signal peptides from bacterial membrane prolipoproteins. Hydrolyzes -Xaa-Yaa-Zaa-|-(S,diacylglyceryl)Cys-, in which Xaa is hydrophobic (preferably Leu), and Yaa (Ala or Ser) and Zaa (Gly or Ala) have small, neutral side chains.. Its pathway is protein modification; lipoprotein biosynthesis (signal peptide cleavage). In terms of biological role, this protein specifically catalyzes the removal of signal peptides from prolipoproteins. This is Lipoprotein signal peptidase from Streptomyces coelicolor (strain ATCC BAA-471 / A3(2) / M145).